The following is a 427-amino-acid chain: 3-phosphoshikimate 1-carboxyvinyltransferase (427 aa).

3 residues coordinate 3-phosphoshikimate: Lys22, Ser23, and Arg27. Residue Lys22 coordinates phosphoenolpyruvate. Gly96 and Arg124 together coordinate phosphoenolpyruvate. The 3-phosphoshikimate site is built by Ser170, Ser171, Gln172, Ser198, Asp314, Asn337, and Lys341. A phosphoenolpyruvate-binding site is contributed by Gln172. The Proton acceptor role is filled by Asp314. Phosphoenolpyruvate contacts are provided by Arg345, Arg387, and Lys412.

It belongs to the EPSP synthase family. As to quaternary structure, monomer.

It is found in the cytoplasm. The catalysed reaction is 3-phosphoshikimate + phosphoenolpyruvate = 5-O-(1-carboxyvinyl)-3-phosphoshikimate + phosphate. The protein operates within metabolic intermediate biosynthesis; chorismate biosynthesis; chorismate from D-erythrose 4-phosphate and phosphoenolpyruvate: step 6/7. Its function is as follows. Catalyzes the transfer of the enolpyruvyl moiety of phosphoenolpyruvate (PEP) to the 5-hydroxyl of shikimate-3-phosphate (S3P) to produce enolpyruvyl shikimate-3-phosphate and inorganic phosphate. This chain is 3-phosphoshikimate 1-carboxyvinyltransferase, found in Sulfurovum sp. (strain NBC37-1).